Here is a 1165-residue protein sequence, read N- to C-terminus: Sperm-associated antigen 5 (1165 aa).

The tract at residues 1 to 23 (MWRVKTLNLGLSPSPQKGKPAMS) is disordered. S12, S14, S66, S161, S321, S333, and S342 each carry phosphoserine. The interval 431–457 (TVPHREARDSSTQTDSSPCGVTKTPKH) is disordered. Positions 440 to 449 (SSTQTDSSPC) are enriched in polar residues. Positions 453–821 (KTPKHLQDSK…LRDTVDSLRA (369 aa)) are interaction with KNSTRN. The stretch at 509–856 (RSKTLVSSCS…LLAEQLQSLT (348 aa)) forms a coiled coil. The segment at 875-907 (PSTGSAPAQEHPLSNDSSISEQTPTAAVDEVPE) is disordered. The span at 876–897 (STGSAPAQEHPLSNDSSISEQT) shows a compositional bias: polar residues. Residues 937 to 1146 (DLEKSLAEMS…IQHVYETLLS (210 aa)) are a coiled coil. Position 946 is a phosphoserine; by GSK3-beta (S946).

As to quaternary structure, homodimer, with a globular head domain and a long stalk. Homooligomer; the globular head domains associate, resulting in aster-like structures. Binds to microtubules in the mitotic spindle. Interacts with DCLRE1B/Apollo. Part of an astrin (SPAG5)-kinastrin (SKAP) complex containing KNSTRN, SPAG5, PLK1, DYNLL1 and SGO2A. Interacts with KNSTRN. Interacts with RPTOR; this interaction competes with RPTOR binding to MTOR, resulting in decreased mTORC1 formation. Interacts with G3BP1. The complex formed with G3BP1 and RPTOR is increased by oxidative stress. Interacts with OSBPL8, PCM1 and CDK5RAP2. Interacts (via C-terminus) with NUMA1 (via C-terminus); this interaction promotes the recruitment of SPAG5 to the microtubules at spindle poles in a dynein-dynactin-dependent manner. Interacts with DYNLL1. In terms of processing, phosphorylated by AURKA. As to expression, detected in testis, but not in the other tissues tested.

The protein localises to the cytoplasm. It localises to the cytoskeleton. It is found in the spindle. Its subcellular location is the spindle pole. The protein resides in the chromosome. The protein localises to the centromere. It localises to the kinetochore. It is found in the midbody. Its subcellular location is the microtubule organizing center. The protein resides in the centrosome. The protein localises to the centriolar satellite. In terms of biological role, essential component of the mitotic spindle required for normal chromosome segregation and progression into anaphase. Required for chromosome alignment, normal timing of sister chromatid segregation, and maintenance of spindle pole architecture. In complex with SKAP, promotes stable microtubule-kinetochore attachments. May contribute to the regulation of separase activity. May regulate AURKA localization to mitotic spindle, but not to centrosomes and CCNB1 localization to both mitotic spindle and centrosomes. Involved in centriole duplication. Required for CDK5RAP22, CEP152, WDR62 and CEP63 centrosomal localization and promotes the centrosomal localization of CDK2. In non-mitotic cells, upon stress induction, inhibits mammalian target of rapamycin complex 1 (mTORC1) association and recruits the mTORC1 component RPTOR to stress granules (SGs), thereby preventing mTORC1 hyperactivation-induced apoptosis. May enhance GSK3B-mediated phosphorylation of other substrates, such as MAPT/TAU. This is Sperm-associated antigen 5 (Spag5) from Mus musculus (Mouse).